We begin with the raw amino-acid sequence, 610 residues long: Zinc metalloproteinase-disintegrin-like 3a (610 aa).

The first 19 residues, 1–19 (MIQVLLVTILAVFPYQGSS), serve as a signal peptide directing secretion. Residues 20 to 188 (IILGSGNVND…KKASQLVVTA (169 aa)) constitute a propeptide that is removed on maturation. The region spanning 198 to 394 (RYVELVIVAD…YTPKCILNEP (197 aa)) is the Peptidase M12B domain. Glutamate 201 serves as a coordination point for Ca(2+). N-linked (GlcNAc...) asparagine glycosylation is present at asparagine 217. Aspartate 285 lines the Ca(2+) pocket. 3 disulfides stabilise this stretch: cysteine 309–cysteine 389, cysteine 349–cysteine 373, and cysteine 351–cysteine 356. Residue histidine 334 participates in Zn(2+) binding. Glutamate 335 is a catalytic residue. Positions 338 and 344 each coordinate Zn(2+). Cysteine 389, asparagine 392, valine 404, asparagine 407, glutamate 411, glutamate 414, and aspartate 417 together coordinate Ca(2+). Residues 402–488 (PPVCGNELLE…DCPTDDFHKN (87 aa)) form the Disintegrin domain. 14 disulfide bridges follow: cysteine 405–cysteine 434, cysteine 416–cysteine 429, cysteine 418–cysteine 424, cysteine 428–cysteine 451, cysteine 442–cysteine 448, cysteine 447–cysteine 473, cysteine 460–cysteine 480, cysteine 467–cysteine 499, cysteine 492–cysteine 504, cysteine 511–cysteine 561, cysteine 526–cysteine 572, cysteine 539–cysteine 549, cysteine 556–cysteine 598, and cysteine 592–cysteine 603. The D/ECD-tripeptide signature appears at 466–468 (ECD).

This sequence belongs to the venom metalloproteinase (M12B) family. P-III subfamily. Requires Zn(2+) as cofactor. As to expression, expressed by the venom gland.

Its subcellular location is the secreted. Its function is as follows. Snake venom metalloproteinase that impairs hemostasis in the envenomed animal. This is Zinc metalloproteinase-disintegrin-like 3a from Crotalus adamanteus (Eastern diamondback rattlesnake).